We begin with the raw amino-acid sequence, 64 residues long: Prokaryotic ubiquitin-like protein Pup (64 aa).

Positions 1–10 (MNQNGSQIHS) are enriched in polar residues. A disordered region spans residues 1–32 (MNQNGSQIHSDGNGHSDDTDTPGVSAGQVSVN). The ARC ATPase binding stretch occupies residues 20–58 (DTPGVSAGQVSVNTAGVDDLLDEIDGLLESNAEEFVRSY). Q64 carries the deamidated glutamine modification. Residue Q64 forms an Isoglutamyl lysine isopeptide (Gln-Lys) (interchain with K-? in acceptor proteins) linkage.

It belongs to the prokaryotic ubiquitin-like protein family. As to quaternary structure, strongly interacts with the proteasome-associated ATPase ARC through a hydrophobic interface; the interacting region of Pup lies in its C-terminal half. There is one Pup binding site per ARC hexamer ring. Post-translationally, is modified by deamidation of its C-terminal glutamine to glutamate by the deamidase Dop, a prerequisite to the subsequent pupylation process.

Its pathway is protein degradation; proteasomal Pup-dependent pathway. Functionally, protein modifier that is covalently attached to lysine residues of substrate proteins, thereby targeting them for proteasomal degradation. The tagging system is termed pupylation. The chain is Prokaryotic ubiquitin-like protein Pup from Corynebacterium diphtheriae (strain ATCC 700971 / NCTC 13129 / Biotype gravis).